A 120-amino-acid chain; its full sequence is uncharacterized protein (120 aa).

The protein localises to the mitochondrion. This is an uncharacterized protein from Arabidopsis thaliana (Mouse-ear cress).